The chain runs to 149 residues: Transthyretin (149 aa).

A signal peptide spans 1–22 (MAFHSLLLLCLAGLAFVSETAA). At Cys32 the chain carries Sulfocysteine. Lys37 is an L-thyroxine binding site. Glu64 is modified (4-carboxyglutamate). The L-thyroxine site is built by Glu76 and Ser139.

It belongs to the transthyretin family. As to quaternary structure, homotetramer. Dimer of dimers. In the homotetramer, subunits assemble around a central channel that can accommodate two ligand molecules. Interacts with RBP4. In terms of processing, sulfonation of the reactive cysteine Cys-32 enhances the stability of the native conformation of TTR, avoiding misassembly of the protein leading to amyloid formation. Detected in liver.

Its subcellular location is the secreted. Its function is as follows. Thyroid hormone-binding protein. Probably transports thyroxine from the bloodstream to the brain. The protein is Transthyretin (TTR) of Macropus giganteus (Eastern gray kangaroo).